The following is a 171-amino-acid chain: Endoribonuclease YbeY (171 aa).

Positions 126, 130, and 136 each coordinate Zn(2+).

It belongs to the endoribonuclease YbeY family. Zn(2+) serves as cofactor.

The protein resides in the cytoplasm. Single strand-specific metallo-endoribonuclease involved in late-stage 70S ribosome quality control and in maturation of the 3' terminus of the 16S rRNA. The chain is Endoribonuclease YbeY from Rhizobium leguminosarum bv. trifolii (strain WSM2304).